A 99-amino-acid polypeptide reads, in one-letter code: UPF0473 protein Athe_1150 (99 aa).

Belongs to the UPF0473 family.

The sequence is that of UPF0473 protein Athe_1150 from Caldicellulosiruptor bescii (strain ATCC BAA-1888 / DSM 6725 / KCTC 15123 / Z-1320) (Anaerocellum thermophilum).